We begin with the raw amino-acid sequence, 329 residues long: MKLLVTGGAGYVGSVAAAVLLEHGHDVTIIDNFSTGNREAVPADARLIEGDVNDVVEEVLSEGGFEGVVHFAARSLVGESVEKPNEYWHDNVVTALTLLDAMRAHGVNNLVFSSTAATYGEPDVVPITEDMPTQPTNAYGATKLSIDYAITSYAAAFGLAATSLRYFNVAGAYGNIGENREVETHLIPLVLQVATGHREKTFMFGDDWPTPDGTAVRDYIHILDLAKAHVLALESNEAGKHRIFNLGSGDGYSVKQVVEMCREVTGHPIPAEVAPRRAGDPATLIASSEKAKQELGWTPEHTDLRTIVEDAWAFTSALGDRSHAAKKKA.

Residues 11 to 12 (YV), 31 to 36 (DNFSTG), 51 to 52 (DV), 71 to 75 (FAARS), T115, Y139, K143, and F167 contribute to the NAD(+) site. Residues T115 and Y139 each coordinate substrate. Catalysis depends on Y139, which acts as the Proton acceptor. Residues N168, 185-186 (HL), 202-204 (FMF), R217, and 277-280 (RAGD) contribute to the substrate site.

The protein belongs to the NAD(P)-dependent epimerase/dehydratase family. As to quaternary structure, homodimer. It depends on NAD(+) as a cofactor.

It carries out the reaction UDP-alpha-D-glucose = UDP-alpha-D-galactose. The protein operates within carbohydrate metabolism; galactose metabolism. Involved in the metabolism of galactose. Catalyzes the conversion of UDP-galactose (UDP-Gal) to UDP-glucose (UDP-Glc) through a mechanism involving the transient reduction of NAD. This Corynebacterium glutamicum (strain ATCC 13032 / DSM 20300 / JCM 1318 / BCRC 11384 / CCUG 27702 / LMG 3730 / NBRC 12168 / NCIMB 10025 / NRRL B-2784 / 534) protein is UDP-glucose 4-epimerase (galE).